The following is a 330-amino-acid chain: Glycerol-3-phosphate dehydrogenase [NAD(P)+] 1 (330 aa).

3 residues coordinate NADPH: Trp15, Arg35, and Lys105. Lys105, Gly133, and Thr135 together coordinate sn-glycerol 3-phosphate. Ala137 serves as a coordination point for NADPH. 5 residues coordinate sn-glycerol 3-phosphate: Lys188, Asp241, Ser251, Arg252, and Asn253. Lys188 functions as the Proton acceptor in the catalytic mechanism. Arg252 provides a ligand contact to NADPH. Positions 276 and 278 each coordinate NADPH.

The protein belongs to the NAD-dependent glycerol-3-phosphate dehydrogenase family.

It localises to the cytoplasm. It carries out the reaction sn-glycerol 3-phosphate + NAD(+) = dihydroxyacetone phosphate + NADH + H(+). The enzyme catalyses sn-glycerol 3-phosphate + NADP(+) = dihydroxyacetone phosphate + NADPH + H(+). It participates in membrane lipid metabolism; glycerophospholipid metabolism. In terms of biological role, catalyzes the reduction of the glycolytic intermediate dihydroxyacetone phosphate (DHAP) to sn-glycerol 3-phosphate (G3P), the key precursor for phospholipid synthesis. This Sphingopyxis alaskensis (strain DSM 13593 / LMG 18877 / RB2256) (Sphingomonas alaskensis) protein is Glycerol-3-phosphate dehydrogenase [NAD(P)+] 1.